The following is a 485-amino-acid chain: Glutamyl-tRNA(Gln) amidotransferase subunit A (485 aa).

Catalysis depends on charge relay system residues Lys79 and Ser154. Ser178 functions as the Acyl-ester intermediate in the catalytic mechanism.

It belongs to the amidase family. GatA subfamily. As to quaternary structure, heterotrimer of A, B and C subunits.

It carries out the reaction L-glutamyl-tRNA(Gln) + L-glutamine + ATP + H2O = L-glutaminyl-tRNA(Gln) + L-glutamate + ADP + phosphate + H(+). Allows the formation of correctly charged Gln-tRNA(Gln) through the transamidation of misacylated Glu-tRNA(Gln) in organisms which lack glutaminyl-tRNA synthetase. The reaction takes place in the presence of glutamine and ATP through an activated gamma-phospho-Glu-tRNA(Gln). The polypeptide is Glutamyl-tRNA(Gln) amidotransferase subunit A (Staphylococcus aureus (strain MRSA252)).